Here is a 514-residue protein sequence, read N- to C-terminus: Cytochrome P450 94A1 (514 aa).

The helical transmembrane segment at 7–29 (EVLLPYLLPLLLLILPTTIFFLT) threads the bilayer. Cys458 lines the heme pocket.

Belongs to the cytochrome P450 family. The cofactor is heme.

Its subcellular location is the endoplasmic reticulum membrane. In terms of biological role, catalyzes the omega-hydroxylation of various fatty acids (FA) from 10 to 18 carbon atoms. The substrate specificity is higher for laurate &gt; palmitate &gt; myristate &gt; linolenate &gt; linoleate &gt; oleate &gt; caprate. May play a minor role in cutin synthesis and could be involved in plant defense. This Vicia sativa (Spring vetch) protein is Cytochrome P450 94A1 (CYP94A1).